The following is a 710-amino-acid chain: Cyclin-dependent kinase G-2 (710 aa).

A disordered region spans residues 1-350 (MAAGRHGGYR…ETPEPVKPPH (350 aa)). The span at 8–30 (GYRDYEARERELDAEASRRSKEQ) shows a compositional bias: basic and acidic residues. Residues 31-40 (QHHHHPSGRH) show a composition bias toward basic residues. Residues 41–64 (QRGDSDPRCEADRRRDGGRSRGGR) are compositionally biased toward basic and acidic residues. Positions 124-133 (SVVAASASSP) are enriched in low complexity. Basic and acidic residues predominate over residues 144 to 163 (WDRDSPKPMHSDVAKGKKAV). Over residues 170–182 (LPLPPPPPLPPQD) the composition is skewed to pro residues. Basic and acidic residues-rich tracts occupy residues 183–195 (HIPERLAVEKSPM) and 209–218 (LQEHAESRVM). Residues 299-308 (DENEDLEVDK) are compositionally biased toward acidic residues. The segment covering 335-344 (YEVRRSETPE) has biased composition (basic and acidic residues). The region spanning 365 to 656 (FERLNKINEG…ADAALQHEWF (292 aa)) is the Protein kinase domain. ATP-binding positions include 371 to 379 (INEGTYGVV) and lysine 394. A Phosphothreonine modification is found at threonine 375. A Phosphotyrosine modification is found at tyrosine 376. Aspartate 489 serves as the catalytic Proton acceptor. Serine 516 is subject to Phosphoserine. Threonine 522 is subject to Phosphothreonine.

Belongs to the protein kinase superfamily. CMGC Ser/Thr protein kinase family. CDC2/CDKX subfamily.

It carries out the reaction L-seryl-[protein] + ATP = O-phospho-L-seryl-[protein] + ADP + H(+). The enzyme catalyses L-threonyl-[protein] + ATP = O-phospho-L-threonyl-[protein] + ADP + H(+). The catalysed reaction is [DNA-directed RNA polymerase] + ATP = phospho-[DNA-directed RNA polymerase] + ADP + H(+). This Oryza sativa subsp. indica (Rice) protein is Cyclin-dependent kinase G-2 (CDKG-2).